Reading from the N-terminus, the 49-residue chain is uncharacterized protein (49 aa).

Residues 20-42 traverse the membrane as a helical segment; that stretch reads LFLVGLTIGKMATSRILSFLGFI.

It is found in the membrane. This is an uncharacterized protein from Dictyostelium discoideum (Social amoeba).